The following is a 632-amino-acid chain: 1-deoxy-D-xylulose-5-phosphate synthase (632 aa).

Residues His-72 and 113-115 (GHA) contribute to the thiamine diphosphate site. Asp-144 serves as a coordination point for Mg(2+). Thiamine diphosphate is bound by residues 145–146 (GA), Asn-174, Tyr-285, and Glu-368. Asn-174 serves as a coordination point for Mg(2+).

Belongs to the transketolase family. DXPS subfamily. As to quaternary structure, homodimer. Mg(2+) is required as a cofactor. The cofactor is thiamine diphosphate.

It catalyses the reaction D-glyceraldehyde 3-phosphate + pyruvate + H(+) = 1-deoxy-D-xylulose 5-phosphate + CO2. Its pathway is metabolic intermediate biosynthesis; 1-deoxy-D-xylulose 5-phosphate biosynthesis; 1-deoxy-D-xylulose 5-phosphate from D-glyceraldehyde 3-phosphate and pyruvate: step 1/1. Its function is as follows. Catalyzes the acyloin condensation reaction between C atoms 2 and 3 of pyruvate and glyceraldehyde 3-phosphate to yield 1-deoxy-D-xylulose-5-phosphate (DXP). The sequence is that of 1-deoxy-D-xylulose-5-phosphate synthase from Cyanothece sp. (strain PCC 7425 / ATCC 29141).